The chain runs to 141 residues: MRHYEIIFLVHPDQSEQVGGMVERYTKLIEEDGGKIHRLEDWGRRQLAYAINNVHKAHYVMLNVECTGKALAELEDNFRYNDAVIRNLVIRRDEAVTGPSEMLKAEENRSERRERRERPEHADGAEGDDSNDSDNSDNADE.

The interval 96-141 (VTGPSEMLKAEENRSERRERRERPEHADGAEGDDSNDSDNSDNADE) is disordered. The segment covering 103 to 124 (LKAEENRSERRERRERPEHADG) has biased composition (basic and acidic residues). Acidic residues predominate over residues 125 to 141 (AEGDDSNDSDNSDNADE).

Belongs to the bacterial ribosomal protein bS6 family.

Binds together with bS18 to 16S ribosomal RNA. The chain is Small ribosomal subunit protein bS6 from Pseudomonas entomophila (strain L48).